The sequence spans 58 residues: Enterocin-HF (58 aa).

Positions 1–15 (MEKLTVKEMSQVVGG) are excised as a propeptide. Cysteine 24 and cysteine 29 are joined by a disulfide.

Its subcellular location is the secreted. Its function is as follows. Bacteriocin. The protein is Enterocin-HF (entHF) of Enterococcus faecium (Streptococcus faecium).